Consider the following 86-residue polypeptide: Large ribosomal subunit protein uL23 (86 aa).

This sequence belongs to the universal ribosomal protein uL23 family. Part of the 50S ribosomal subunit. Contacts protein L29.

Its function is as follows. Binds to 23S rRNA. One of the proteins that surrounds the polypeptide exit tunnel on the outside of the ribosome. The polypeptide is Large ribosomal subunit protein uL23 (Methanococcus maripaludis (strain DSM 14266 / JCM 13030 / NBRC 101832 / S2 / LL)).